A 569-amino-acid polypeptide reads, in one-letter code: BICD family-like cargo adapter 1 (569 aa).

The interval 1–36 is disordered; sequence MSASCLDLISAPPQPDSDRMDRALNPGRQNSPDTAG. A CC1 box motif is present at residues 97 to 101; sequence AAKLG. Residues 102-283 are a coiled coil; that stretch reads KALLERNQDL…TLELEKHCHH (182 aa). The tract at residues 385-405 is disordered; it reads ALSTDSSMDESSETLSAKDVP. Residues 458-520 are a coiled coil; it reads NEQLQSAIRD…LEAWQDDMHR (63 aa). A disordered region spans residues 533 to 554; it reads EWKDPPFSFSRRGAAASRPTQR.

This sequence belongs to the BICDR family. As to quaternary structure, part of a tripartite complex with dynein and dynactin, acts an adapter linking the dynein motor complex and dynactin. In terms of tissue distribution, highly expressed in developing neural tissues and developing eye.

The protein localises to the cytoplasm. The protein resides in the cytoskeleton. Its subcellular location is the microtubule organizing center. It is found in the centrosome. Functionally, acts as an adapter protein linking the dynein motor complex to various cargos and converts dynein from a non-processive to a highly processive motor in the presence of dynactin. Facilitates the interaction between dynein and dynactin and activates dynein processivity (the ability to move along a microtubule for a long distance without falling off the track). Predominantly recruits 2 dyneins, which increases both the force and speed of the microtubule motor. Component of secretory vesicle machinery in developing neurons that acts as a regulator of neurite outgrowth. Regulates the secretory vesicle transport by controlling the accumulation of Rab6-containing secretory vesicles in the pericentrosomal region restricting anterograde secretory transport during the early phase of neuronal differentiation, thereby inhibiting neuritogenesis. This is BICD family-like cargo adapter 1 (bicdl1) from Danio rerio (Zebrafish).